A 184-amino-acid polypeptide reads, in one-letter code: Photosystem I assembly protein Ycf4 (184 aa).

2 helical membrane-spanning segments follow: residues 21–43 (NYFW…VSSY) and 63–85 (GIVM…FTIF).

The protein belongs to the Ycf4 family.

It is found in the plastid. It localises to the chloroplast thylakoid membrane. In terms of biological role, seems to be required for the assembly of the photosystem I complex. In Chaetosphaeridium globosum (Charophycean green alga), this protein is Photosystem I assembly protein Ycf4.